The following is a 339-amino-acid chain: Transcription initiation factor IIB (339 aa).

The TFIIB-type zinc finger occupies 39 to 70 (EELICPVCGSKSIIKDYERAEIVCEMCGCVLQ). C43, C46, C62, and C65 together coordinate Zn(2+). 2 consecutive repeat copies span residues 156 to 239 (SELD…SREL) and 250 to 331 (DYVP…ELTE).

The protein belongs to the TFIIB family.

In terms of biological role, stabilizes TBP binding to an archaeal box-A promoter. Also responsible for recruiting RNA polymerase II to the pre-initiation complex (DNA-TBP-TFIIB). This Methanococcus maripaludis (strain C5 / ATCC BAA-1333) protein is Transcription initiation factor IIB.